The following is a 246-amino-acid chain: Isoprenyl transferase (246 aa).

Residue Asp-18 is part of the active site. Asp-18 is a binding site for Mg(2+). Substrate contacts are provided by residues 19 to 22 (GNGR), Trp-23, Arg-31, His-35, and 63 to 65 (SAE). Asn-66 functions as the Proton acceptor in the catalytic mechanism. Substrate-binding positions include Trp-67, Arg-69, Arg-186, and 192–194 (RIS). Residue Glu-205 coordinates Mg(2+).

It belongs to the UPP synthase family. Homodimer. It depends on Mg(2+) as a cofactor.

Its function is as follows. Catalyzes the condensation of isopentenyl diphosphate (IPP) with allylic pyrophosphates generating different type of terpenoids. In Geobacter sulfurreducens (strain ATCC 51573 / DSM 12127 / PCA), this protein is Isoprenyl transferase.